Consider the following 186-residue polypeptide: Histone deacetylase complex subunit SAP25 (186 aa).

Disordered regions lie at residues 1–25 (MSPL…PSCG) and 148–186 (EQTP…GTDT). Composition is skewed to polar residues over residues 148–163 (EQTP…STSC) and 177–186 (GDQSCSGTDT).

In terms of assembly, may be a component of the mSIN3A corepressor complex. Interacts with SIN3A and HDAC2. Widely expressed.

It localises to the nucleus. The protein resides in the cytoplasm. Its function is as follows. Involved in the transcriptional repression mediated by the mSIN3A but not the N-CoR corepressor complex. The chain is Histone deacetylase complex subunit SAP25 (Sap25) from Mus musculus (Mouse).